The sequence spans 338 residues: Holliday junction branch migration complex subunit RuvB (338 aa).

The large ATPase domain (RuvB-L) stretch occupies residues M1–Y182. ATP is bound by residues L21, R22, G63, K66, T67, T68, E129–F131, R172, Y182, and R219. T67 provides a ligand contact to Mg(2+). Positions K183 to Q253 are small ATPAse domain (RuvB-S). A head domain (RuvB-H) region spans residues D256–Y338. Positions 292, 311, and 316 each coordinate DNA.

The protein belongs to the RuvB family. As to quaternary structure, homohexamer. Forms an RuvA(8)-RuvB(12)-Holliday junction (HJ) complex. HJ DNA is sandwiched between 2 RuvA tetramers; dsDNA enters through RuvA and exits via RuvB. An RuvB hexamer assembles on each DNA strand where it exits the tetramer. Each RuvB hexamer is contacted by two RuvA subunits (via domain III) on 2 adjacent RuvB subunits; this complex drives branch migration. In the full resolvosome a probable DNA-RuvA(4)-RuvB(12)-RuvC(2) complex forms which resolves the HJ.

It is found in the cytoplasm. The catalysed reaction is ATP + H2O = ADP + phosphate + H(+). The RuvA-RuvB-RuvC complex processes Holliday junction (HJ) DNA during genetic recombination and DNA repair, while the RuvA-RuvB complex plays an important role in the rescue of blocked DNA replication forks via replication fork reversal (RFR). RuvA specifically binds to HJ cruciform DNA, conferring on it an open structure. The RuvB hexamer acts as an ATP-dependent pump, pulling dsDNA into and through the RuvAB complex. RuvB forms 2 homohexamers on either side of HJ DNA bound by 1 or 2 RuvA tetramers; 4 subunits per hexamer contact DNA at a time. Coordinated motions by a converter formed by DNA-disengaged RuvB subunits stimulates ATP hydrolysis and nucleotide exchange. Immobilization of the converter enables RuvB to convert the ATP-contained energy into a lever motion, pulling 2 nucleotides of DNA out of the RuvA tetramer per ATP hydrolyzed, thus driving DNA branch migration. The RuvB motors rotate together with the DNA substrate, which together with the progressing nucleotide cycle form the mechanistic basis for DNA recombination by continuous HJ branch migration. Branch migration allows RuvC to scan DNA until it finds its consensus sequence, where it cleaves and resolves cruciform DNA. This is Holliday junction branch migration complex subunit RuvB from Staphylococcus carnosus (strain TM300).